A 347-amino-acid polypeptide reads, in one-letter code: 3-isopropylmalate dehydrogenase (347 aa).

Substrate-binding residues include R87, R97, R121, and D212. 3 residues coordinate Mg(2+): D212, D236, and D240. NAD(+) is bound at residue 272–284 (GSAPDIAGQGTAD).

It belongs to the isocitrate and isopropylmalate dehydrogenases family. LeuB type 2 subfamily. As to quaternary structure, homodimer. Mg(2+) serves as cofactor. Mn(2+) is required as a cofactor.

Its subcellular location is the cytoplasm. It catalyses the reaction (2R,3S)-3-isopropylmalate + NAD(+) = 4-methyl-2-oxopentanoate + CO2 + NADH. It participates in amino-acid biosynthesis; L-leucine biosynthesis; L-leucine from 3-methyl-2-oxobutanoate: step 3/4. Its function is as follows. Catalyzes the oxidation of 3-carboxy-2-hydroxy-4-methylpentanoate (3-isopropylmalate) to 3-carboxy-4-methyl-2-oxopentanoate. The product decarboxylates to 4-methyl-2 oxopentanoate. The polypeptide is 3-isopropylmalate dehydrogenase (Saccharopolyspora erythraea (strain ATCC 11635 / DSM 40517 / JCM 4748 / NBRC 13426 / NCIMB 8594 / NRRL 2338)).